Consider the following 430-residue polypeptide: Hemagglutinin-esterase (430 aa).

A signal peptide spans 1-27 (MLRMRVRPPSAIPVFLIFVLLPFVLTS). Residues 16-133 (LIFVLLPFVL…GSFGWVSNKV (118 aa)) form an esterase domain first part region. Residues 28–404 (KPITPHYGPG…ENVDVTSSAY (377 aa)) lie on the Virion surface side of the membrane. Serine 49 functions as the Nucleophile in the catalytic mechanism. Cysteine 53 and cysteine 69 are disulfide-bonded. N-linked (GlcNAc...) asparagine; by host glycosylation is found at asparagine 88, asparagine 117, asparagine 159, asparagine 165, asparagine 247, asparagine 268, and asparagine 289. Disulfide bonds link cysteine 120–cysteine 168, cysteine 207–cysteine 284, and cysteine 215–cysteine 257. The receptor binding stretch occupies residues 134 to 274 (GFYSKLYSMA…GVYNATTFGK (141 aa)). Positions 275 to 390 (FLIYPTKSYC…SCPQYYKLFE (116 aa)) are esterase domain second part. A disulfide bridge connects residues cysteine 315 and cysteine 320. Asparagine 324 is a glycosylation site (N-linked (GlcNAc...) asparagine; by host). Residues aspartate 336 and histidine 339 each act as charge relay system in the active site. Asparagine 354 is a glycosylation site (N-linked (GlcNAc...) asparagine; by host). An intrachain disulfide couples cysteine 357 to cysteine 382. Residues 405-425 (FVATWVLLVLVIILIFILISF) form a helical membrane-spanning segment. Residues 426–430 (CLSSY) lie on the Intravirion side of the membrane.

Belongs to the influenza type C/coronaviruses hemagglutinin-esterase family. Post-translationally, N-glycosylated.

The protein resides in the virion membrane. Its subcellular location is the host cell membrane. It catalyses the reaction N-acetyl-9-O-acetylneuraminate + H2O = N-acetylneuraminate + acetate + H(+). The enzyme catalyses N-acetyl-4-O-acetylneuraminate + H2O = N-acetylneuraminate + acetate + H(+). Functionally, structural protein that makes short spikes at the surface of the virus. Contains receptor binding and receptor-destroying activities. Mediates de-O-acetylation of N-acetyl-9-O-acetylneuraminic acid, which is probably the receptor determinant recognized by the virus on the surface of erythrocytes and susceptible cells. This receptor-destroying activity is important for virus release as it probably helps preventing self-aggregation and ensures the efficient spread of the progeny virus from cell to cell. May serve as a secondary viral attachment protein for initiating infection, the spike protein being the major one. Seems to be a 'luxury' protein that is not absolutely necessary for virus infection in culture. However, its presence in the virus may alter its pathogenicity. May become a target for both the humoral and the cellular branches of the immune system. The protein is Hemagglutinin-esterase (HE) of Porcine torovirus (strain P10) (PoTV).